Here is a 338-residue protein sequence, read N- to C-terminus: Tagatose 1,6-diphosphate aldolase (338 aa).

The protein belongs to the aldolase LacD family.

The enzyme catalyses D-tagatofuranose 1,6-bisphosphate = D-glyceraldehyde 3-phosphate + dihydroxyacetone phosphate. It participates in carbohydrate metabolism; D-tagatose 6-phosphate degradation; D-glyceraldehyde 3-phosphate and glycerone phosphate from D-tagatose 6-phosphate: step 2/2. The polypeptide is Tagatose 1,6-diphosphate aldolase (Listeria innocua serovar 6a (strain ATCC BAA-680 / CLIP 11262)).